Consider the following 239-residue polypeptide: Transcriptional activatory protein AadR (239 aa).

27–149 is an a nucleoside 3',5'-cyclic phosphate binding site; the sequence is ICGELGPADH…FATRELSLAQ (123 aa). The HTH crp-type domain occupies 158–231; the sequence is RSAEEKVAAF…PDGVRVLDPK (74 aa). A DNA-binding region (H-T-H motif) is located at residues 191–210; the sequence is RQDIADFLGLTIETVSRTFT.

In terms of biological role, transcriptional activator of anaerobic gene expression. For aromatic acid degradation. Also required for the anaerobic degradation of benzoate. The protein is Transcriptional activatory protein AadR (aadR) of Rhodopseudomonas palustris (strain ATCC BAA-98 / CGA009).